Reading from the N-terminus, the 338-residue chain is Glycerol-3-phosphate dehydrogenase [NAD(P)+] (338 aa).

Residues S13, W14, and K108 each coordinate NADPH. Sn-glycerol 3-phosphate is bound by residues K108, G139, and S141. A143 is a binding site for NADPH. 5 residues coordinate sn-glycerol 3-phosphate: K194, D247, S257, R258, and N259. K194 (proton acceptor) is an active-site residue. NADPH is bound at residue R258. Residues V282 and E284 each contribute to the NADPH site.

The protein belongs to the NAD-dependent glycerol-3-phosphate dehydrogenase family.

The protein resides in the cytoplasm. The enzyme catalyses sn-glycerol 3-phosphate + NAD(+) = dihydroxyacetone phosphate + NADH + H(+). The catalysed reaction is sn-glycerol 3-phosphate + NADP(+) = dihydroxyacetone phosphate + NADPH + H(+). The protein operates within membrane lipid metabolism; glycerophospholipid metabolism. Functionally, catalyzes the reduction of the glycolytic intermediate dihydroxyacetone phosphate (DHAP) to sn-glycerol 3-phosphate (G3P), the key precursor for phospholipid synthesis. This is Glycerol-3-phosphate dehydrogenase [NAD(P)+] from Streptococcus pneumoniae (strain CGSP14).